The following is a 191-amino-acid chain: Protein GrpE (191 aa).

Basic and acidic residues-rich tracts occupy residues 1–19 and 29–42; these read MKDEHNQEHDHLSQKEPES and QQGEEKQEASEKEC. A disordered region spans residues 1–42; sequence MKDEHNQEHDHLSQKEPESYQKACACKEQQGEEKQEASEKEC.

The protein belongs to the GrpE family. As to quaternary structure, homodimer.

The protein resides in the cytoplasm. Its function is as follows. Participates actively in the response to hyperosmotic and heat shock by preventing the aggregation of stress-denatured proteins, in association with DnaK and GrpE. It is the nucleotide exchange factor for DnaK and may function as a thermosensor. Unfolded proteins bind initially to DnaJ; upon interaction with the DnaJ-bound protein, DnaK hydrolyzes its bound ATP, resulting in the formation of a stable complex. GrpE releases ADP from DnaK; ATP binding to DnaK triggers the release of the substrate protein, thus completing the reaction cycle. Several rounds of ATP-dependent interactions between DnaJ, DnaK and GrpE are required for fully efficient folding. The chain is Protein GrpE from Helicobacter pylori (strain HPAG1).